Here is a 489-residue protein sequence, read N- to C-terminus: MAKPTAPSTPRPWSGRFAGSLHPRIARFNASIGFDIRLLPYDVAGSLAHVQMLGACGILSREEAEQIRQGLEQIEKEVAEGIFQPDPEAEDVHYAVERRLVALVGEVGKKLHTGRSRNDQVATDLRLYLRDEIDTIRQALWELRGVLLDLASQHVETILPGYTHLQRAQPISLAHHLLAYEEMLWRDWQRLGRVREEVNVCPLGSGALAGTSLPIDRQLVAHLLGFERISANSLDAVSDRDYLVEFHAAASLILVHLSRLSEELILWATQEFGFVALTDACATGSSLMPQKKNPDVLELVRGKTGRVFGHLQALLVTLKGLPLAYNKDLQEDKEGLFDTVDTVKACLEAMTILLREGIQFQTQRMEAAVQEDFSNATDVADYLVRKGIPFRAAHDLVGQIVRTCVAEGILLKDLPLERWKSFHRAFEEDIFAAIDPRQVVAARLSAGGTGFAVVREALQRAQARYQQTEPAEEPPLPPSSPGSGLPLES.

The disordered stretch occupies residues 462 to 489 (QARYQQTEPAEEPPLPPSSPGSGLPLES).

This sequence belongs to the lyase 1 family. Argininosuccinate lyase subfamily.

The protein localises to the cytoplasm. It catalyses the reaction 2-(N(omega)-L-arginino)succinate = fumarate + L-arginine. It participates in amino-acid biosynthesis; L-arginine biosynthesis; L-arginine from L-ornithine and carbamoyl phosphate: step 3/3. In Synechococcus sp. (strain JA-3-3Ab) (Cyanobacteria bacterium Yellowstone A-Prime), this protein is Argininosuccinate lyase.